Consider the following 341-residue polypeptide: Peroxisomal membrane protein import receptor PEX19 (341 aa).

Residues 1 to 18 (MNENEYDNFDDLDDLLDE) show a composition bias toward acidic residues. 5 disordered regions span residues 1–26 (MNENEYDNFDDLDDLLDEDPTKLDEQ), 39–66 (DSENKEKNAESKDSDGVQVANESEEDPE), 109–141 (VPRQQMEQGSSSLKSNSTDKGTLNGSNPGFKNI), 293–312 (LGDSPIRSANSPLKHGNEEE), and 318–341 (LEIDGNDPNLGNLDKELTDGCKQQ). Over residues 39–53 (DSENKEKNAESKDSD) the composition is skewed to basic and acidic residues. Ser61 is modified (phosphoserine). Polar residues predominate over residues 113–141 (QMEQGSSSLKSNSTDKGTLNGSNPGFKNI). Ser303 is subject to Phosphoserine. The segment covering 330-341 (LDKELTDGCKQQ) has biased composition (basic and acidic residues). Residue Cys338 is modified to Cysteine methyl ester. Cys338 is lipidated: S-farnesyl cysteine. Positions 339–341 (KQQ) are cleaved as a propeptide — removed in mature form.

This sequence belongs to the peroxin-19 family. Interacts (farnesylated) with PEX3; farnesylation is required for this interaction. Interacts with PEX2, PEX5, PEX10, PEX11, PEX12, PEX13, PEX14, PEX17, PEX22, PEX25, PEX30 and PEX32; the interaction requires well-defined PEX19-binding sites within the peroxisomal membrane protein targeting signal (mPTS) of the PMPs and is independent on the presence of PEX3. Interacts with VPS1.

It is found in the cytoplasm. The protein localises to the peroxisome membrane. Its subcellular location is the endoplasmic reticulum membrane. Its function is as follows. Required for proper post-translational import and stabilization of peroxisomal membrane proteins (PMPs). Acts as a cytosolic import receptor for PMPs and delivers them to the docking factor PEX3 at the peroxisomal membrane for subsequent insertion into the membrane. Acts as a chaperone in stabilizing or maintaining PMPs in the lipid bilayer. Directs PEX17, a peripheral component of the peroxisomal matrix protein translocation machinery, to peroxisomes. Stabilizes VPS1, a protein required for peroxisomal fission, at the peroxisomal membrane. Also acts in conjunction with PEX3 in the formation of peroxisomes from preperoxisomal compartments at the endoplasmic reticulum during de novo peroxisome synthesis, probably via the import of additional PMPs. The chain is Peroxisomal membrane protein import receptor PEX19 (PEX19) from Saccharomyces cerevisiae (strain YJM789) (Baker's yeast).